We begin with the raw amino-acid sequence, 258 residues long: Chymotrypsin-like elastase family member 1 (258 aa).

The signal sequence occupies residues 1 to 8 (MLVLYGHS). A propeptide spans 9–18 (TQDLPETNAR) (activation peptide). The 238-residue stretch at 19–256 (VVGGTEAGRN…YISWINNVIA (238 aa)) folds into the Peptidase S1 domain. Cys48 and Cys64 are disulfide-bonded. His63 acts as the Charge relay system in catalysis. Asp77, Asn79, Gln82, and Glu87 together coordinate Ca(2+). An N-linked (GlcNAc...) asparagine glycan is attached at Asn79. The active-site Charge relay system is Asp111. 3 disulfides stabilise this stretch: Cys145–Cys212, Cys176–Cys192, and Cys202–Cys232. The active-site Charge relay system is Ser206. A glycan (N-linked (GlcNAc...) asparagine) is linked at Asn233.

The protein belongs to the peptidase S1 family. Elastase subfamily. Requires Ca(2+) as cofactor. Basal layers of epidermis (at protein level). Not expressed in the pancreas.

It localises to the secreted. It catalyses the reaction Hydrolysis of proteins, including elastin. Preferential cleavage: Ala-|-Xaa.. Its function is as follows. Serine proteases that hydrolyze many proteins in addition to elastin. The polypeptide is Chymotrypsin-like elastase family member 1 (CELA1) (Homo sapiens (Human)).